The sequence spans 122 residues: Large ribosomal subunit protein uL14 (122 aa).

The protein belongs to the universal ribosomal protein uL14 family. In terms of assembly, part of the 50S ribosomal subunit. Forms a cluster with proteins L3 and L19. In the 70S ribosome, L14 and L19 interact and together make contacts with the 16S rRNA in bridges B5 and B8.

Functionally, binds to 23S rRNA. Forms part of two intersubunit bridges in the 70S ribosome. The chain is Large ribosomal subunit protein uL14 from Halorhodospira halophila (strain DSM 244 / SL1) (Ectothiorhodospira halophila (strain DSM 244 / SL1)).